Consider the following 555-residue polypeptide: Sulfite reductase [NADPH] hemoprotein beta-component (555 aa).

[4Fe-4S] cluster is bound by residues cysteine 430, cysteine 436, cysteine 475, and cysteine 479. Cysteine 479 is a siroheme binding site.

Belongs to the nitrite and sulfite reductase 4Fe-4S domain family. In terms of assembly, alpha(8)-beta(8). The alpha component is a flavoprotein, the beta component is a hemoprotein. It depends on siroheme as a cofactor. [4Fe-4S] cluster is required as a cofactor.

The catalysed reaction is hydrogen sulfide + 3 NADP(+) + 3 H2O = sulfite + 3 NADPH + 4 H(+). Its pathway is sulfur metabolism; hydrogen sulfide biosynthesis; hydrogen sulfide from sulfite (NADPH route): step 1/1. Functionally, component of the sulfite reductase complex that catalyzes the 6-electron reduction of sulfite to sulfide. This is one of several activities required for the biosynthesis of L-cysteine from sulfate. The sequence is that of Sulfite reductase [NADPH] hemoprotein beta-component from Leptospira biflexa serovar Patoc (strain Patoc 1 / Ames).